We begin with the raw amino-acid sequence, 414 residues long: Ornithine aminotransferase (414 aa).

An intrachain disulfide couples cysteine 154 to cysteine 163. The residue at position 262 (lysine 262) is an N6-(pyridoxal phosphate)lysine.

The protein belongs to the class-III pyridoxal-phosphate-dependent aminotransferase family. As to quaternary structure, homodimer. It depends on pyridoxal 5'-phosphate as a cofactor. In terms of processing, the disulfide bond between Cys-154 and Cys-163 is reduced by TRX1 which increases OAT catalytic activity.

The protein resides in the cytoplasm. It catalyses the reaction a 2-oxocarboxylate + L-ornithine = L-glutamate 5-semialdehyde + an L-alpha-amino acid. It carries out the reaction L-ornithine + 2-oxoglutarate = L-glutamate 5-semialdehyde + L-glutamate. Its pathway is amino-acid biosynthesis; L-proline biosynthesis; L-glutamate 5-semialdehyde from L-ornithine: step 1/1. Unlike for mammalian OATs, activity is increased by TRX1-mediated reduction of the disulfide bond between Cys-154 and Cys-163. Binding to TRX1 may also induce conformational changes that facilitate substrate binding. In terms of biological role, the enzyme has a very narrow substrate specificity and can only catalyze the transamination of alpha-ketoglutarate with ornithine or N-acetylornithine and, to a lesser extent, of glutamate-5-semialdehyde with glutamate and alanine. The sequence is that of Ornithine aminotransferase from Plasmodium falciparum (isolate 3D7).